The following is a 1065-amino-acid chain: Isoleucine--tRNA ligase (1065 aa).

The short motif at 49–59 (PYVSGAIHLGT) is the 'HIGH' region element. The 'KMSKS' region motif lies at 625 to 629 (KMSKS). Lys628 lines the ATP pocket.

It belongs to the class-I aminoacyl-tRNA synthetase family. IleS type 2 subfamily. In terms of assembly, monomer. Zn(2+) serves as cofactor.

It is found in the cytoplasm. The catalysed reaction is tRNA(Ile) + L-isoleucine + ATP = L-isoleucyl-tRNA(Ile) + AMP + diphosphate. In terms of biological role, catalyzes the attachment of isoleucine to tRNA(Ile). As IleRS can inadvertently accommodate and process structurally similar amino acids such as valine, to avoid such errors it has two additional distinct tRNA(Ile)-dependent editing activities. One activity is designated as 'pretransfer' editing and involves the hydrolysis of activated Val-AMP. The other activity is designated 'posttransfer' editing and involves deacylation of mischarged Val-tRNA(Ile). The sequence is that of Isoleucine--tRNA ligase from Thermococcus kodakarensis (strain ATCC BAA-918 / JCM 12380 / KOD1) (Pyrococcus kodakaraensis (strain KOD1)).